A 718-amino-acid polypeptide reads, in one-letter code: Serine/threonine-protein kinase tousled-like 2 (718 aa).

The interval Gly-24 to Ser-85 is disordered. The segment covering Pro-29 to Ser-44 has biased composition (polar residues). Over residues Ser-46–Arg-61 the composition is skewed to basic and acidic residues. Phosphoserine is present on residues Ser-73, Gln-94, Leu-99, and Ser-102. The disordered stretch occupies residues Gln-147–Thr-176. The segment at Asn-193–Glu-244 is required for interaction with TLK1 and DYNLL1/LC8. Coiled-coil stretches lie at residues Asn-193–Glu-244, Ala-285–Pro-315, and His-349–Gln-397. Positions Leu-310–Gly-337 are disordered. The Protein kinase domain maps to Tyr-408–Leu-687. Residues Leu-414–Val-422 and Lys-437 each bind ATP. Asp-538 (proton acceptor) is an active-site residue. Ser-696 carries the post-translational modification Phosphoserine; by CHEK1.

Belongs to the protein kinase superfamily. Ser/Thr protein kinase family. Monomer. May form homodimers; homodimerization may enhance autophosphoylation and enzymatic activity. Heterodimer with TLK1. Interacts with YWHAZ; association with 14-3-3 proteins such as YWHAZ regulates subcellular location. May also interact with FEZ1/LZTS1 and FEZ2. Interacts with CHD7 and CHD8. Interacts with DYNLL1/LC8. The cofactor is Mg(2+). In terms of processing, phosphorylated at Ser-696, probably by CHEK1. Post-translationally, autophosphorylated; phosphorylation promotes the assembly of higher order oligomers and enzymatic activity. As to expression, ubiquitously expressed in all tissues examined, with high levels in heart and testis, in particular the pachytene spermatocytes and in round spermatids. Some evidence for the existence of a testis-specific isoform suggesting a role in spermatogenesis.

The protein resides in the nucleus. The protein localises to the nucleoplasm. It is found in the cytoplasm. Its subcellular location is the perinuclear region. It localises to the cytoskeleton. It carries out the reaction L-seryl-[protein] + ATP = O-phospho-L-seryl-[protein] + ADP + H(+). The catalysed reaction is L-threonyl-[protein] + ATP = O-phospho-L-threonyl-[protein] + ADP + H(+). Its activity is regulated as follows. Cell cycle-regulated, with maximal activity in the S-phase. Rapidly and transiently inhibited by phosphorylation following the generation of DNA double-stranded breaks during S-phase, probably by CHEK1, possibly at Ser-696. This inhibition is cell cycle checkpoint- and ATM-dependent. In terms of biological role, serine/threonine-protein kinase involved in the process of chromatin assembly and probably also DNA replication, transcription, repair, and chromosome segregation. Phosphorylates the chromatin assembly factors ASF1A and ASF1B. Phosphorylation of ASF1A prevents its proteasome-mediated degradation, thereby enhancing chromatin assembly. Negative regulator of amino acid starvation-induced autophagy. Testis-specific isoforms may play a role in spermatogenesis. Highly expressed in embryos throughout development. The sequence is that of Serine/threonine-protein kinase tousled-like 2 (Tlk2) from Mus musculus (Mouse).